Consider the following 212-residue polypeptide: Methylthioribulose-1-phosphate dehydratase (212 aa).

Positions 97 and 99 each coordinate Zn(2+).

This sequence belongs to the aldolase class II family. MtnB subfamily. As to quaternary structure, homotetramer. The cofactor is Zn(2+).

It catalyses the reaction 5-(methylsulfanyl)-D-ribulose 1-phosphate = 5-methylsulfanyl-2,3-dioxopentyl phosphate + H2O. Its pathway is amino-acid biosynthesis; L-methionine biosynthesis via salvage pathway; L-methionine from S-methyl-5-thio-alpha-D-ribose 1-phosphate: step 2/6. Catalyzes the dehydration of methylthioribulose-1-phosphate (MTRu-1-P) into 2,3-diketo-5-methylthiopentyl-1-phosphate (DK-MTP-1-P). The sequence is that of Methylthioribulose-1-phosphate dehydratase from Bacillus cytotoxicus (strain DSM 22905 / CIP 110041 / 391-98 / NVH 391-98).